An 879-amino-acid chain; its full sequence is Prostaglandin F2 receptor negative regulator (879 aa).

An N-terminal signal peptide occupies residues 1-21 (MGRPAPRPLLLALLSLAVCRG). Ig-like C2-type domains follow at residues 22-129 (RVVR…ATVQ) and 149-268 (PSSR…KAVE). Residues 22–832 (RVVRVPAGTL…MDVLNAFKYP (811 aa)) lie on the Extracellular side of the membrane. 2 disulfide bridges follow: cysteine 43–cysteine 119 and cysteine 169–cysteine 247. An N-linked (GlcNAc...) asparagine glycan is attached at asparagine 44. A Cell attachment site motif is present at residues 89 to 91 (RGD). Position 271 is a phosphothreonine (threonine 271). 4 Ig-like C2-type domains span residues 276–389 (PTAL…WHKV), 406–527 (PEYQ…RNSS), 544–662 (ASED…AWSP), and 688–813 (PIFN…AEIH). An intrachain disulfide couples cysteine 299 to cysteine 373. N-linked (GlcNAc...) asparagine glycans are attached at residues asparagine 300, asparagine 383, and asparagine 413. The short motif at 424–427 (PTEL) is the Endoplasmic reticulum retention signal element. Residues cysteine 429 and cysteine 515 are joined by a disulfide bond. 4 N-linked (GlcNAc...) asparagine glycosylation sites follow: asparagine 525, asparagine 600, asparagine 618, and asparagine 691. A disulfide bond links cysteine 571 and cysteine 655. The short motif at 703 to 705 (RGD) is the Cell attachment site element. An intrachain disulfide couples cysteine 711 to cysteine 793. The chain crosses the membrane as a helical span at residues 833–853 (LLIGVGLSTVIGLLSCLIGYC). The Cytoplasmic segment spans residues 854-879 (SSHWCCKKEVRETRRERRRLMSMEMD).

Interacts with CD9 and CD81. Part of a complex composed of CD9, CD81 and IGSF8. Also seems to interact with CD63, CD82 and CD151. As to expression, reproductive tissues, lung and heart.

Its subcellular location is the endoplasmic reticulum membrane. The protein localises to the golgi apparatus. It localises to the trans-Golgi network membrane. Functionally, inhibits the binding of prostaglandin F2-alpha (PGF2-alpha) to its specific FP receptor, by decreasing the receptor number rather than the affinity constant. Functional coupling with the prostaglandin F2-alpha receptor seems to occur. In myoblasts, associates with tetraspanins CD9 and CD81 to prevent myotube fusion during muscle regeneration. The sequence is that of Prostaglandin F2 receptor negative regulator (Ptgfrn) from Rattus norvegicus (Rat).